A 377-amino-acid polypeptide reads, in one-letter code: Mechanosensory abnormality protein 6 (377 aa).

At 1–13 the chain is on the cytoplasmic side; it reads MGLQSAAAHFINR. A helical transmembrane segment spans residues 14–34; the sequence is FIIWITIFMVACFLLRLLVVL. The Extracellular portion of the chain corresponds to 35-377; the sequence is DLNKRVYNHT…HCDLTHSYIT (343 aa). Cys-48 and Cys-369 are disulfide-bonded. Residue Asn-94 is glycosylated (N-linked (GlcNAc...) asparagine).

Belongs to the paraoxonase family. In terms of assembly, component of a non-voltage-gated amiloride-sensitive cation channel complex (also called the degenerin channel complex) composed of at least the mec-2, mec-4, mec-6 and mec-10 subunits; the complex mediates mechanotransduction in touch cells. Interacts with mec-2, mec-4 and mec-10. Glycosylated. As to expression, expressed in neurons including the six touch receptors, ventral cord motor neurons, HSN, PVD, PVC, IL1, and several neurons near the nerve ring, in the anal ganglion and in the male tail sensory rays, in muscles including the body wall, vulval, intestinal, anal depressor and sphincter muscles, and in the excretory canal.

Its subcellular location is the cell membrane. The protein resides in the cell projection. The protein localises to the axon. Subunit of an amiloride-sensitive cation channel (degenerin channel complex) permeable for sodium, potassium, lithium and N-methylglucamine, and required for mechanosensory transduction (touch sensitivity). Interacts with degenerin channel proteins and stabilizes the channel. Plays a role in mechanosensory transduction (touch sensitivity). This chain is Mechanosensory abnormality protein 6, found in Caenorhabditis elegans.